A 407-amino-acid chain; its full sequence is Argininosuccinate synthase (407 aa).

Residues 16–24 and Ala-44 each bind ATP; that span reads AYSGGLDTS. Residues Tyr-96 and Ser-101 each contribute to the L-citrulline site. Gly-126 contributes to the ATP binding site. 3 residues coordinate L-aspartate: Thr-128, Asn-132, and Asp-133. Asn-132 is a binding site for L-citrulline. The L-citrulline site is built by Arg-136, Ser-185, Ser-194, Glu-270, and Tyr-282.

The protein belongs to the argininosuccinate synthase family. Type 1 subfamily. Homotetramer.

Its subcellular location is the cytoplasm. It catalyses the reaction L-citrulline + L-aspartate + ATP = 2-(N(omega)-L-arginino)succinate + AMP + diphosphate + H(+). It participates in amino-acid biosynthesis; L-arginine biosynthesis; L-arginine from L-ornithine and carbamoyl phosphate: step 2/3. The polypeptide is Argininosuccinate synthase (Shewanella sp. (strain ANA-3)).